Consider the following 161-residue polypeptide: Urease accessory protein UreE (161 aa).

Belongs to the UreE family.

It localises to the cytoplasm. Its function is as follows. Involved in urease metallocenter assembly. Binds nickel. Probably functions as a nickel donor during metallocenter assembly. The protein is Urease accessory protein UreE of Arthrobacter sp. (strain FB24).